The sequence spans 254 residues: Probable phosphatase Shew185_1467 (254 aa).

H8, H10, H16, H41, E74, H102, H132, D193, and H195 together coordinate Zn(2+).

This sequence belongs to the PHP family. It depends on Zn(2+) as a cofactor.

The polypeptide is Probable phosphatase Shew185_1467 (Shewanella baltica (strain OS185)).